We begin with the raw amino-acid sequence, 95 residues long: Small ribosomal subunit protein bS6 (95 aa).

The protein belongs to the bacterial ribosomal protein bS6 family.

Functionally, binds together with bS18 to 16S ribosomal RNA. The sequence is that of Small ribosomal subunit protein bS6 from Geobacillus kaustophilus (strain HTA426).